The sequence spans 241 residues: Alpha/beta-tubulin-N-acetyltransferase 9 (241 aa).

One can recognise an N-acetyltransferase domain in the interval 34–181 (EELRHLTASE…VTLRLAVSEP (148 aa)).

This sequence belongs to the acetyltransferase family. GNAT subfamily.

It carries out the reaction N-terminal L-methionyl-[tubulin] + acetyl-CoA = N-terminal N(alpha)-acetyl-L-methionyl-[tubulin] + CoA + H(+). Its function is as follows. N-acetyltransferase that mediates the acetylation of the N-terminal residues of alpha- and beta-tubulin. The protein is Alpha/beta-tubulin-N-acetyltransferase 9 (Nat9) of Mus musculus (Mouse).